The following is a 279-amino-acid chain: Protease HtpX homolog (279 aa).

The next 2 helical transmembrane spans lie at 4 to 24 (IFLF…VLAV) and 34 to 54 (GSLL…SLLM). Histidine 140 provides a ligand contact to Zn(2+). Glutamate 141 is an active-site residue. Histidine 144 contributes to the Zn(2+) binding site. 2 helical membrane-spanning segments follow: residues 155–175 (LIQG…ANLI) and 189–209 (FLVS…IVMW). Glutamate 215 contacts Zn(2+).

This sequence belongs to the peptidase M48B family. Requires Zn(2+) as cofactor.

It localises to the cell inner membrane. The sequence is that of Protease HtpX homolog from Neisseria meningitidis serogroup B (strain ATCC BAA-335 / MC58).